Reading from the N-terminus, the 155-residue chain is V-type proton ATPase 16 kDa proteolipid subunit c (155 aa).

Over 1–10 the chain is Lumenal; the sequence is MADIKNNPEY. A helical transmembrane segment spans residues 11–33; sequence SSFFGVMGASSAMVFSAMGAAYG. The Cytoplasmic portion of the chain corresponds to 34–55; that stretch reads TAKSGTGIAAMSVMRPELIMKS. Residues 56–76 form a helical membrane-spanning segment; the sequence is IIPVVMAGIIAIYGLVVAVLI. Residues 77-92 lie on the Lumenal side of the membrane; sequence ANSLTDGITLYRSFLQ. Residues 93–114 traverse the membrane as a helical segment; the sequence is LGAGLSVGLSGLAAGFAIGIVG. At 115–131 the chain is on the cytoplasmic side; the sequence is DAGVRGTAQQPRLFVGM. Residues 132–152 form a helical membrane-spanning segment; sequence ILILIFAEVLGLYGLIVALIL. At 153-155 the chain is on the lumenal side; that stretch reads STK.

Belongs to the V-ATPase proteolipid subunit family. In terms of assembly, V-ATPase is a heteromultimeric enzyme made up of two complexes: the ATP-hydrolytic V1 complex and the proton translocation V0 complex. The V1 complex consists of three catalytic AB heterodimers that form a heterohexamer, three peripheral stalks each consisting of EG heterodimers, one central rotor including subunits D and F, and the regulatory subunits C and H. The proton translocation complex V0 consists of the proton transport subunit a, a ring of proteolipid subunits c9c'', rotary subunit d, subunits e and f, and the accessory subunits ATP6AP1/Ac45 and ATP6AP2/PRR. Interacts with the V0 complex V-ATPase subunit a4 ATP6V0A4. Interacts with LASS2. Interacts with RNF182; this interaction leads to ubiquitination and degradation via the proteasome pathway. In terms of processing, ubiquitinated by RNF182, leading to its degradation via the ubiquitin-proteasome pathway.

It localises to the cytoplasmic vesicle. The protein localises to the clathrin-coated vesicle membrane. The protein resides in the secretory vesicle. Its subcellular location is the synaptic vesicle membrane. Functionally, proton-conducting pore forming subunit of the V0 complex of vacuolar(H+)-ATPase (V-ATPase), a multisubunit enzyme composed of a peripheral complex (V1) that hydrolyzes ATP and a membrane integral complex (V0) that translocates protons. V-ATPase is responsible for acidifying and maintaining the pH of intracellular compartments and in some cell types, is targeted to the plasma membrane, where it is responsible for acidifying the extracellular environment. This chain is V-type proton ATPase 16 kDa proteolipid subunit c (Atp6v0c), found in Mus musculus (Mouse).